Here is a 96-residue protein sequence, read N- to C-terminus: UPF0729 protein AGAP000931 (96 aa).

Residues 65 to 96 (VPPGHDPVGPTVAADTATSDAVDDAASSKKTL) are disordered. Over residues 75 to 96 (TVAADTATSDAVDDAASSKKTL) the composition is skewed to low complexity.

Belongs to the UPF0729 family.

In Anopheles gambiae (African malaria mosquito), this protein is UPF0729 protein AGAP000931.